The primary structure comprises 422 residues: Tyrosine--tRNA ligase (422 aa).

Residue Y37 coordinates L-tyrosine. The short motif at P42–H51 is the 'HIGH' region element. Positions 175 and 179 each coordinate L-tyrosine. Residues K235 to T239 carry the 'KMSKS' region motif. K238 lines the ATP pocket. Residues K357–K414 form the S4 RNA-binding domain.

This sequence belongs to the class-I aminoacyl-tRNA synthetase family. TyrS type 1 subfamily. In terms of assembly, homodimer.

Its subcellular location is the cytoplasm. The enzyme catalyses tRNA(Tyr) + L-tyrosine + ATP = L-tyrosyl-tRNA(Tyr) + AMP + diphosphate + H(+). Its function is as follows. Catalyzes the attachment of tyrosine to tRNA(Tyr) in a two-step reaction: tyrosine is first activated by ATP to form Tyr-AMP and then transferred to the acceptor end of tRNA(Tyr). The sequence is that of Tyrosine--tRNA ligase from Buchnera aphidicola subsp. Acyrthosiphon pisum (strain APS) (Acyrthosiphon pisum symbiotic bacterium).